A 308-amino-acid chain; its full sequence is Tryptophan 2,3-dioxygenase (308 aa).

The disordered stretch occupies residues 1-37 (MKPPGDNAPAGCPFSGARAAQPAHEAPHVPGDAAGET). Substrate is bound by residues 77 to 81 (FIIQH), Tyr139, and Arg143. His266 is a heme binding site. Position 280 (Thr280) interacts with substrate.

It belongs to the tryptophan 2,3-dioxygenase family. In terms of assembly, homotetramer. Heme is required as a cofactor.

The catalysed reaction is L-tryptophan + O2 = N-formyl-L-kynurenine. It functions in the pathway amino-acid degradation; L-tryptophan degradation via kynurenine pathway; L-kynurenine from L-tryptophan: step 1/2. Its function is as follows. Heme-dependent dioxygenase that catalyzes the oxidative cleavage of the L-tryptophan (L-Trp) pyrrole ring and converts L-tryptophan to N-formyl-L-kynurenine. Catalyzes the oxidative cleavage of the indole moiety. The chain is Tryptophan 2,3-dioxygenase from Burkholderia ambifaria (strain MC40-6).